The sequence spans 2234 residues: Bridge-like lipid transfer protein family member 2 (2234 aa).

A signal peptide spans 1 to 31; it reads MPLFLSALLVLLLVALSALFLGRWLVVRLAT. Residues 29–108 are transmembrane domain; sequence LATRWCQRKL…LQKVSSLSAP (80 aa). Ser-563 is modified (phosphoserine). Residues 1496 to 1529 are disordered; that stretch reads QMSAKKPKRGIPPSAQVPPHVSTPSFSGRPDKGS. Residues 1814–1885 adopt a coiled-coil conformation; the sequence is ILHLQEAVRQ…LNILIRCFKD (72 aa). Ser-1846 and Ser-2090 each carry phosphoserine.

Belongs to the SABRE family.

It localises to the cell membrane. It is found in the endoplasmic reticulum membrane. The protein resides in the mitochondrion membrane. Tube-forming lipid transport protein which binds to phosphatidylinositols and affects phosphatidylinositol-4,5-bisphosphate (PtdIns-4,5-P2) distribution. The protein is Bridge-like lipid transfer protein family member 2 (Bltp2) of Mus musculus (Mouse).